A 259-amino-acid polypeptide reads, in one-letter code: Short chain dehydrogenase ausX (259 aa).

Positions 13, 59, 121, 153, 157, and 186 each coordinate NADP(+). Tyr153 acts as the Proton acceptor in catalysis. Tyr153 acts as the Proton donor in catalysis. Lys157 (lowers pKa of active site Tyr) is an active-site residue.

This sequence belongs to the short-chain dehydrogenases/reductases (SDR) family.

It participates in secondary metabolite biosynthesis; terpenoid biosynthesis. Functionally, short chain dehydrogenase; part of the gene cluster A that mediates the biosynthesis of the fungal meroterpenoid acetoxydehydroaustin. The first step of the pathway is the synthesis of 3,5-dimethylorsellinic acid by the polyketide synthase ausA. 3,5-dimethylorsellinic acid is then prenylated by the polyprenyl transferase ausN. Further epoxidation by the FAD-dependent monooxygenase ausM and cyclization by the probable terpene cyclase ausL lead to the formation of protoaustinoid A. Protoaustinoid A is then oxidized to spiro-lactone preaustinoid A3 by the combined action of the FAD-binding monooxygenases ausB and ausC, and the dioxygenase ausE. Acid-catalyzed keto-rearrangement and ring contraction of the tetraketide portion of preaustinoid A3 by ausJ lead to the formation of preaustinoid A4. The aldo-keto reductase ausK, with the help of ausH, is involved in the next step by transforming preaustinoid A4 into isoaustinone which is in turn hydroxylated by the P450 monooxygenase ausI to form austinolide. The cytochrome P450 monooxygenase ausG then modifies austinolide to austinol. Austinol is further acetylated to austin by the O-acetyltransferase ausP, which spontaneously changes to dehydroaustin. The cytochrome P450 monooxygenase then converts dehydroaustin is into 7-dehydrodehydroaustin. The hydroxylation catalyzed by ausR permits the second O-acetyltransferase ausQ to add an additional acetyl group to the molecule, leading to the formation of acetoxydehydroaustin. Due to genetic rearrangements of the clusters and the subsequent loss of some enzymes, the end product of the Penicillium brasilianum austinoid biosynthesis clusters is acetoxydehydroaustin. The sequence is that of Short chain dehydrogenase ausX from Penicillium brasilianum.